The sequence spans 119 residues: Large ribosomal subunit protein bL20 (119 aa).

It belongs to the bacterial ribosomal protein bL20 family.

Its function is as follows. Binds directly to 23S ribosomal RNA and is necessary for the in vitro assembly process of the 50S ribosomal subunit. It is not involved in the protein synthesizing functions of that subunit. The protein is Large ribosomal subunit protein bL20 of Clostridium botulinum (strain ATCC 19397 / Type A).